Reading from the N-terminus, the 294-residue chain is Cyclin-dependent kinase A-1 (294 aa).

The 284-residue stretch at 4 to 287 (YEKEEKIGEG…ARQALEHEYF (284 aa)) folds into the Protein kinase domain. ATP-binding positions include 10–18 (IGEGTYGVV) and Lys-33. Thr-14 is modified (phosphothreonine). Tyr-15 carries the post-translational modification Phosphotyrosine. Asp-127 serves as the catalytic Proton acceptor. Thr-161 is subject to Phosphothreonine; by CAK.

It belongs to the protein kinase superfamily. CMGC Ser/Thr protein kinase family. CDC2/CDKX subfamily. Phosphorylated at Thr-161 by CDKD-1. Expressed in the dividing region of the root apex and in differentiated cells such as those in the sclerenchyma, pericycle and parenchyma of the central cylinder.

The catalysed reaction is L-seryl-[protein] + ATP = O-phospho-L-seryl-[protein] + ADP + H(+). It catalyses the reaction L-threonyl-[protein] + ATP = O-phospho-L-threonyl-[protein] + ADP + H(+). It carries out the reaction [DNA-directed RNA polymerase] + ATP = phospho-[DNA-directed RNA polymerase] + ADP + H(+). The chain is Cyclin-dependent kinase A-1 (CDKA-1) from Oryza sativa subsp. japonica (Rice).